The sequence spans 716 residues: Fatty acid oxidation complex subunit alpha (716 aa).

An enoyl-CoA hydratase/isomerase region spans residues 1 to 188; that stretch reads MIYQSPTIQV…KVGAIDAVVA (188 aa). Residue Asp-295 participates in substrate binding. The interval 310–716 is 3-hydroxyacyl-CoA dehydrogenase; sequence KDIKHAAVLG…SNNGSYYPKA (407 aa). NAD(+) is bound by residues Met-323, Asp-342, 399–401, Lys-406, and Ser-428; that span reads VVE. His-449 functions as the For 3-hydroxyacyl-CoA dehydrogenase activity in the catalytic mechanism. Residue Asn-452 participates in NAD(+) binding. Substrate-binding residues include Asn-499 and Tyr-659.

In the N-terminal section; belongs to the enoyl-CoA hydratase/isomerase family. It in the C-terminal section; belongs to the 3-hydroxyacyl-CoA dehydrogenase family. As to quaternary structure, heterotetramer of two alpha chains (FadB) and two beta chains (FadA).

It carries out the reaction a (3S)-3-hydroxyacyl-CoA + NAD(+) = a 3-oxoacyl-CoA + NADH + H(+). The enzyme catalyses a (3S)-3-hydroxyacyl-CoA = a (2E)-enoyl-CoA + H2O. The catalysed reaction is a 4-saturated-(3S)-3-hydroxyacyl-CoA = a (3E)-enoyl-CoA + H2O. It catalyses the reaction (3S)-3-hydroxybutanoyl-CoA = (3R)-3-hydroxybutanoyl-CoA. It carries out the reaction a (3Z)-enoyl-CoA = a 4-saturated (2E)-enoyl-CoA. The enzyme catalyses a (3E)-enoyl-CoA = a 4-saturated (2E)-enoyl-CoA. Its pathway is lipid metabolism; fatty acid beta-oxidation. Its function is as follows. Involved in the aerobic and anaerobic degradation of long-chain fatty acids via beta-oxidation cycle. Catalyzes the formation of 3-oxoacyl-CoA from enoyl-CoA via L-3-hydroxyacyl-CoA. It can also use D-3-hydroxyacyl-CoA and cis-3-enoyl-CoA as substrate. The sequence is that of Fatty acid oxidation complex subunit alpha from Shewanella amazonensis (strain ATCC BAA-1098 / SB2B).